Reading from the N-terminus, the 151-residue chain is Ribosome maturation factor RimP (151 aa).

It belongs to the RimP family.

The protein resides in the cytoplasm. In terms of biological role, required for maturation of 30S ribosomal subunits. In Aliivibrio salmonicida (strain LFI1238) (Vibrio salmonicida (strain LFI1238)), this protein is Ribosome maturation factor RimP.